We begin with the raw amino-acid sequence, 380 residues long: Pregnancy-associated glycoprotein 6 (380 aa).

The N-terminal stretch at 1-15 (MKWLVLLGLVSISEC) is a signal peptide. A propeptide spans 16–53 (IVKIPLRRVKTMRKTLSEKNMLNNFLKEHAYRLSQISF) (activation peptide). N-linked (GlcNAc...) asparagine glycosylation is found at N57 and N74. Positions 71-377 (YLGNITIGTP…DRGHDRIGLA (307 aa)) constitute a Peptidase A1 domain. D89 is an active-site residue. Cysteines 102 and 107 form a disulfide. Residue N125 is glycosylated (N-linked (GlcNAc...) asparagine). C261 and C265 are disulfide-bonded. The active site involves D270. An intrachain disulfide couples C303 to C337.

Belongs to the peptidase A1 family. In terms of tissue distribution, trophoblast and placental tissue. Produced specifically in the invasive binucleate cells of the placenta.

It is found in the secreted. It localises to the extracellular space. In Ovis aries (Sheep), this protein is Pregnancy-associated glycoprotein 6.